Consider the following 117-residue polypeptide: MTHWLCFTLALVAVRGVLSEIQLVESGGAIRKPGDSLRLSCKASGFTFSDTWMAWARQPPGKGLQWVGEINGNSETIRYAPEVKGRLTISRDNTQNLLFLQISSLKPEDTATYYCAR.

The N-terminal stretch at 1–19 (MTHWLCFTLALVAVRGVLS) is a signal peptide. Positions 20-49 (EIQLVESGGAIRKPGDSLRLSCKASGFTFS) are framework-1. Cys-41 and Cys-115 are disulfide-bonded. Positions 50-54 (DTWMA) are complementarity-determining-1. Residues 55 to 68 (WARQPPGKGLQWVG) are framework-2. Positions 69–85 (EINGNSETIRYAPEVKG) are complementarity-determining-2. Positions 86–117 (RLTISRDNTQNLLFLQISSLKPEDTATYYCAR) are framework-3.

This Caiman crocodilus (Spectacled caiman) protein is Ig heavy chain V region G4 (G4).